A 50-amino-acid chain; its full sequence is Large ribosomal subunit protein eL39 (50 aa).

Residues Met-1–Leu-12 show a composition bias toward basic residues. The tract at residues Met-1 to Arg-21 is disordered.

This sequence belongs to the eukaryotic ribosomal protein eL39 family.

In Haloquadratum walsbyi (strain DSM 16790 / HBSQ001), this protein is Large ribosomal subunit protein eL39.